Consider the following 364-residue polypeptide: Flagellar P-ring protein (364 aa).

Positions 1 to 21 are cleaved as a signal peptide; it reads MNVFKVFCLMVLLGWQLPAMA.

It belongs to the FlgI family. In terms of assembly, the basal body constitutes a major portion of the flagellar organelle and consists of four rings (L,P,S, and M) mounted on a central rod.

It is found in the periplasm. The protein resides in the bacterial flagellum basal body. In terms of biological role, assembles around the rod to form the L-ring and probably protects the motor/basal body from shearing forces during rotation. This is Flagellar P-ring protein from Pseudoalteromonas translucida (strain TAC 125).